We begin with the raw amino-acid sequence, 1724 residues long: Protein scribble homolog (1724 aa).

The sufficient for targeting to adherens junction stretch occupies residues M1–E821. 17 LRR repeats span residues N11 to Y34, N35 to L58, H59 to F81, Q83 to Q105, L107 to L127, R128 to L150, S151 to V174, L176 to L196, P197 to L219, Q221 to L242, A244 to L265, K266 to C288, E289 to L311, K312 to C334, S336 to A357, E359 to L380, and L382 to Q405. 3 disordered regions span residues R451–M484, Y496–T620, and S646–F683. Positions S518–T534 are enriched in low complexity. Over residues V554 to Y567 the composition is skewed to acidic residues. The span at F574–G583 shows a compositional bias: basic and acidic residues. The span at D584 to R598 shows a compositional bias: acidic residues. The segment covering E611 to T620 has biased composition (basic and acidic residues). Positions R661–D678 are enriched in acidic residues. PDZ domains follow at residues T731–R818, A867–Q955, E1005–P1094, and E1101–F1193. The disordered stretch occupies residues Q955–C995. Disordered stretches follow at residues L1283–K1407, K1414–L1433, R1449–V1468, and S1488–A1555. Basic and acidic residues predominate over residues F1295–H1306. Composition is skewed to polar residues over residues P1308–T1329, P1346–P1357, and P1364–S1385. The span at H1395–K1407 shows a compositional bias: basic and acidic residues. The stretch at E1430–E1461 forms a coiled coil. Residues L1453–D1463 show a composition bias toward acidic residues. A compositionally biased stretch (polar residues) spans G1490–T1506. Residues P1507–S1518 show a composition bias toward low complexity. A compositionally biased stretch (basic and acidic residues) spans G1521 to Q1538. S1609 is modified (phosphoserine). A disordered region spans residues I1621 to V1684. Positions K1623–T1632 are enriched in basic and acidic residues.

Post-translationally, palmitoylated.

The protein localises to the cell membrane. Its subcellular location is the cell junction. It localises to the adherens junction. The protein resides in the cell projection. It is found in the lamellipodium. The protein localises to the cytoplasm. Its subcellular location is the postsynapse. It localises to the presynapse. In terms of biological role, scaffold protein involved in different aspects of polarized cells differentiation regulating epithelial and neuronal morphogenesis. Regulates the caudal migration of the nVII motor neurons. Required for convergent extension movements during gastrulation. The protein is Protein scribble homolog (scrib) of Danio rerio (Zebrafish).